Reading from the N-terminus, the 1040-residue chain is Multidrug resistance protein MdtB (1040 aa).

A run of 12 helical transmembrane segments spans residues 25–45 (LLMA…PVAA), 347–367 (LMLA…NIPA), 369–389 (IIPG…MVFL), 396–416 (LTLM…IVVI), 440–460 (IGFT…PLLF), 472–492 (FAVT…TLTP), 537–557 (WLTL…WIVI), 863–883 (LGST…VLGV), 888–908 (FIHP…ALLA), 910–930 (IIAG…LIGI), 968–988 (ILMT…STGV), and 998–1018 (IAMV…TPVI).

The protein belongs to the resistance-nodulation-cell division (RND) (TC 2.A.6) family. MdtB subfamily. As to quaternary structure, part of a tripartite efflux system composed of MdtA, MdtB and MdtC. MdtB forms a heteromultimer with MdtC.

It is found in the cell inner membrane. This Salmonella schwarzengrund (strain CVM19633) protein is Multidrug resistance protein MdtB.